A 442-amino-acid polypeptide reads, in one-letter code: Putative arsenical pump membrane protein (442 aa).

The next 11 helical transmembrane spans lie at 22 to 42 (IPATFGALMVLLCGSVSLADL), 56 to 76 (ILATMIMAIALESFGFFYWVA), 85 to 105 (GSGIKLFWLTNLLCFLMTIFL), 107 to 127 (NDGSILITTPILLLVLKYLGL), 136 to 156 (LLSGVLIATASSAPIGVSNIV), 174 to 194 (MMFVPSMMGLIFMTCLLFMFF), 250 to 270 (LFAASYTGISVPLVAVIGSFI), 294 to 314 (IFIFAFTMYVLIYGLHNIGFT), 328 to 347 (SLAHATFASGISTSVFSNLF), 378 to 398 (IIGSDIGSLLLPMGTLATLIW), and 419 to 439 (IIIIPLTVLFTLTCLYFWISW).

Belongs to the ArsB family.

The protein resides in the cell membrane. The protein is Putative arsenical pump membrane protein (ywrK) of Bacillus subtilis (strain 168).